Here is a 305-residue protein sequence, read N- to C-terminus: Methionyl-tRNA formyltransferase (305 aa).

108 to 111 (SLLP) serves as a coordination point for (6S)-5,6,7,8-tetrahydrofolate.

Belongs to the Fmt family.

The enzyme catalyses L-methionyl-tRNA(fMet) + (6R)-10-formyltetrahydrofolate = N-formyl-L-methionyl-tRNA(fMet) + (6S)-5,6,7,8-tetrahydrofolate + H(+). In terms of biological role, attaches a formyl group to the free amino group of methionyl-tRNA(fMet). The formyl group appears to play a dual role in the initiator identity of N-formylmethionyl-tRNA by promoting its recognition by IF2 and preventing the misappropriation of this tRNA by the elongation apparatus. The chain is Methionyl-tRNA formyltransferase from Thermus thermophilus (strain ATCC BAA-163 / DSM 7039 / HB27).